A 104-amino-acid polypeptide reads, in one-letter code: L-rhamnose mutarotase (104 aa).

Tyr18 serves as a coordination point for substrate. The Proton donor role is filled by His22. Substrate contacts are provided by residues Tyr41 and 76–77; that span reads WW.

This sequence belongs to the rhamnose mutarotase family. Homodimer.

It is found in the cytoplasm. It carries out the reaction alpha-L-rhamnose = beta-L-rhamnose. The protein operates within carbohydrate metabolism; L-rhamnose metabolism. Functionally, involved in the anomeric conversion of L-rhamnose. In Salmonella dublin (strain CT_02021853), this protein is L-rhamnose mutarotase.